The following is a 311-amino-acid chain: Olfactory receptor 287 (311 aa).

Residues 1–27 (MAWSTGQNLSTPGPFILLGFPGPRSMR) are Extracellular-facing. N-linked (GlcNAc...) asparagine glycosylation occurs at asparagine 8. Residues 28 to 53 (IGLFLLFLVMYLLTVVGNLAIISLVG) traverse the membrane as a helical segment. The Cytoplasmic portion of the chain corresponds to 54-60 (AHRCLQT). Residues 61-82 (PMYFFLCNLSFLEIWFTTACVP) traverse the membrane as a helical segment. The Extracellular portion of the chain corresponds to 83 to 103 (KTLATFAPRGGVISLAGCATQ). The cysteines at positions 100 and 192 are disulfide-linked. A helical membrane pass occupies residues 104 to 123 (MYFVFSLGCTEYFLLAVMAY). Residues 124–142 (DRYLAICLPLRYGGIMTPG) lie on the Cytoplasmic side of the membrane. Residues 143–161 (LAMRLALGSWLCGFSAITV) traverse the membrane as a helical segment. At 162–199 (PATLIARLSFCGSRVINHFFCDISPWIVLSCTDTQVVE) the chain is on the extracellular side. A helical transmembrane segment spans residues 200 to 222 (LVSFGIAFCVILGSCGITLVSYA). The Cytoplasmic segment spans residues 223 to 239 (YIITTIIKIPSARGRHR). The helical transmembrane segment at 240-263 (AFSTCSSHLTVVLIWYGSTIFLHV) threads the bilayer. Over 264 to 275 (RTSVESSLDLTK) the chain is Extracellular. A helical membrane pass occupies residues 276 to 295 (AITVLNTIVTPVLNPFIYTL). Over 296 to 311 (RNKDVKEALRRTVKGK) the chain is Cytoplasmic.

Belongs to the G-protein coupled receptor 1 family. Olfactory epithelium.

It is found in the cell membrane. In terms of biological role, odorant receptor. The chain is Olfactory receptor 287 (Olr287) from Rattus norvegicus (Rat).